The chain runs to 326 residues: Transposase InsH for insertion sequence element IS5H (326 aa).

The protein belongs to the transposase 11 family.

Its function is as follows. Involved in the transposition of the insertion sequence IS5. This is Transposase InsH for insertion sequence element IS5H (insH6) from Escherichia coli (strain K12).